Consider the following 152-residue polypeptide: METPKLSVEAIEKGTVIDHIPAGRGLTILRQFKLLHYGNAVTVGFNLPSKTQGSKDIIKIKGVCLDDKAADRLALFAPEAVVNTIDHFKVVQKRHLNLPDEIAEVFRCPNTNCASHGEPVKSRFYVKKHNGQTRLKCHYCEKTYSRDSVAEA.

The Zn(2+) site is built by Cys108, Cys113, Cys137, and Cys140.

The protein belongs to the PyrI family. In terms of assembly, contains catalytic and regulatory chains. The cofactor is Zn(2+).

Its function is as follows. Involved in allosteric regulation of aspartate carbamoyltransferase. The chain is Aspartate carbamoyltransferase regulatory chain from Neisseria meningitidis serogroup A / serotype 4A (strain DSM 15465 / Z2491).